Here is a 247-residue protein sequence, read N- to C-terminus: Molybdate/tungstate transport system permease protein WtpB (247 aa).

The Cytoplasmic portion of the chain corresponds to 1 to 8; it reads MRRDYTLY. The chain crosses the membrane as a helical span at residues 9 to 29; sequence LFAALGTFLIAYIAVPIAVIF. The Extracellular portion of the chain corresponds to 30-55; the sequence is LKQASDVEMLVKTLHDPYVIEAIRNS. The ABC transmembrane type-1 domain occupies 52 to 238; that stretch reads IRNSLLTATA…SLSLGIFVIL (187 aa). A helical transmembrane segment spans residues 56-76; it reads LLTATATALIALLFGVPLGYV. The Cytoplasmic segment spans residues 77–90; that stretch reads LARKDFPGKSAVQA. Residues 91–111 form a helical membrane-spanning segment; it reads LVDVPIVIPHSVVGIMLLVTF. Topologically, residues 112-114 are extracellular; the sequence is SNS. A helical membrane pass occupies residues 115–135; that stretch reads ILDSYKGIVAAMLFVSAPFTI. The Cytoplasmic segment spans residues 136–163; sequence NAARDGFLAVDEKLEAVARTLGASRWRA. A helical membrane pass occupies residues 164–184; the sequence is FLSISLPMAFPSIASGAIMTW. Residues 185 to 222 lie on the Extracellular side of the membrane; that stretch reads ARAISEVGAILIVAYYPKTAQVLILEYFNNYGLRASRP. A helical membrane pass occupies residues 223-243; it reads IAVIMVSLSLGIFVILRWLVG. Residues 244-247 are Cytoplasmic-facing; sequence RKNA.

This sequence belongs to the binding-protein-dependent transport system permease family. In terms of assembly, the complex is composed of two ATP-binding proteins (WtpC), two transmembrane proteins (WtpB) and a solute-binding protein (WtpA).

The protein resides in the cell membrane. Its function is as follows. Part of the ABC transporter complex WtpABC involved in molybdate/tungstate import. Probably responsible for the translocation of the substrate across the membrane. The chain is Molybdate/tungstate transport system permease protein WtpB (wtpB) from Thermococcus kodakarensis (strain ATCC BAA-918 / JCM 12380 / KOD1) (Pyrococcus kodakaraensis (strain KOD1)).